Here is a 272-residue protein sequence, read N- to C-terminus: Putative phosphatase BU028/BU029 (272 aa).

Catalysis depends on Asp8, which acts as the Nucleophile. Position 8 (Asp8) interacts with Mg(2+). Residue Leu9 coordinates phosphate. Residue Asp10 coordinates Mg(2+). Residues 42–43 and Lys191 each bind phosphate; that span reads SG. Asp214 serves as a coordination point for Mg(2+). Asn217 contributes to the phosphate binding site.

The protein belongs to the HAD-like hydrolase superfamily. Cof family. It depends on Mg(2+) as a cofactor.

This Buchnera aphidicola subsp. Acyrthosiphon pisum (strain APS) (Acyrthosiphon pisum symbiotic bacterium) protein is Putative phosphatase BU028/BU029.